The primary structure comprises 310 residues: Glutamyl-Q tRNA(Asp) synthetase (310 aa).

Residues 8–12 (RFAPS) and glutamate 44 contribute to the L-glutamate site. The short motif at 11–21 (PSPTGPLHLGS) is the 'HIGH' region element. Zn(2+)-binding residues include cysteine 100, cysteine 102, tyrosine 123, and cysteine 127. 2 residues coordinate L-glutamate: tyrosine 183 and arginine 201. The 'KMSKS' region motif lies at 239 to 243 (KLSKQ). Lysine 242 provides a ligand contact to ATP.

Belongs to the class-I aminoacyl-tRNA synthetase family. GluQ subfamily. It depends on Zn(2+) as a cofactor.

In terms of biological role, catalyzes the tRNA-independent activation of glutamate in presence of ATP and the subsequent transfer of glutamate onto a tRNA(Asp). Glutamate is transferred on the 2-amino-5-(4,5-dihydroxy-2-cyclopenten-1-yl) moiety of the queuosine in the wobble position of the QUC anticodon. This Cupriavidus metallidurans (strain ATCC 43123 / DSM 2839 / NBRC 102507 / CH34) (Ralstonia metallidurans) protein is Glutamyl-Q tRNA(Asp) synthetase.